Consider the following 673-residue polypeptide: DNA ligase (673 aa).

NAD(+) contacts are provided by residues 36-40 (DSEYD), 85-86 (SL), and Glu118. Lys120 acts as the N6-AMP-lysine intermediate in catalysis. Arg141, Glu178, Lys295, and Lys319 together coordinate NAD(+). Zn(2+) is bound by residues Cys413, Cys416, Cys431, and Cys437. Positions 596–673 (VRDNPLKGKT…SENEFLALLA (78 aa)) constitute a BRCT domain.

It belongs to the NAD-dependent DNA ligase family. LigA subfamily. It depends on Mg(2+) as a cofactor. Mn(2+) is required as a cofactor.

The catalysed reaction is NAD(+) + (deoxyribonucleotide)n-3'-hydroxyl + 5'-phospho-(deoxyribonucleotide)m = (deoxyribonucleotide)n+m + AMP + beta-nicotinamide D-nucleotide.. DNA ligase that catalyzes the formation of phosphodiester linkages between 5'-phosphoryl and 3'-hydroxyl groups in double-stranded DNA using NAD as a coenzyme and as the energy source for the reaction. It is essential for DNA replication and repair of damaged DNA. The polypeptide is DNA ligase (Histophilus somni (strain 129Pt) (Haemophilus somnus)).